The sequence spans 342 residues: Methylthioribose-1-phosphate isomerase (342 aa).

Residues 44 to 46 (RGA), Arg-85, and Gln-192 each bind substrate. Catalysis depends on Asp-233, which acts as the Proton donor. 243-244 (NK) provides a ligand contact to substrate.

This sequence belongs to the eIF-2B alpha/beta/delta subunits family. MtnA subfamily.

It carries out the reaction 5-(methylsulfanyl)-alpha-D-ribose 1-phosphate = 5-(methylsulfanyl)-D-ribulose 1-phosphate. It functions in the pathway amino-acid biosynthesis; L-methionine biosynthesis via salvage pathway; L-methionine from S-methyl-5-thio-alpha-D-ribose 1-phosphate: step 1/6. Its function is as follows. Catalyzes the interconversion of methylthioribose-1-phosphate (MTR-1-P) into methylthioribulose-1-phosphate (MTRu-1-P). This Caldicellulosiruptor saccharolyticus (strain ATCC 43494 / DSM 8903 / Tp8T 6331) protein is Methylthioribose-1-phosphate isomerase.